The chain runs to 199 residues: Charged multivesicular body protein 1b (199 aa).

Residues 26-48 (DKEEKAEKAKIKKAIQKGNMEVA) adopt a coiled-coil conformation. An interaction with IST1 region spans residues 132–156 (MEDTMSSTTTLTTPQGQVDMLLQEM). Residues 167-199 (ELPQGQTGSVGTSVASAEQDELSQRLARLRDQV) form a disordered region. The segment covering 170-182 (QGQTGSVGTSVAS) has biased composition (polar residues). Positions 174 to 199 (GSVGTSVASAEQDELSQRLARLRDQV) are interaction with SPAST. The stretch at 178–199 (TSVASAEQDELSQRLARLRDQV) forms a coiled coil. The tract at residues 180–196 (VASAEQDELSQRLARLR) is interaction with VPS4A, MITD1 and STAMBP. The interaction with VTA1 stretch occupies residues 180-199 (VASAEQDELSQRLARLRDQV). The interval 183-199 (AEQDELSQRLARLRDQV) is interaction with VPS4B. Residues 186–196 (DELSQRLARLR) carry the MIT-interacting motif motif.

The protein belongs to the SNF7 family. In terms of assembly, probable peripherally associated component of the endosomal sorting required for transport complex III (ESCRT-III). ESCRT-III components are thought to multimerize to form a flat lattice on the perimeter membrane of the endosome. Several assembly forms of ESCRT-III may exist that interact and act sequentially. Interacts with CHMP1A. Interacts with VTA1; the interaction probably involves the open conformation of CHMP1B. Interacts with CHMP2A. Interacts with VPS4A; the interaction is direct. Interacts with VPS4B; the interaction is direct. Interacts with SPAST (via MIT domain); the interaction is direct. Interacts with IST1. Interacts with MITD1. Interacts with STAMBP.

The protein localises to the cytoplasm. Its subcellular location is the cytosol. The protein resides in the endosome. It localises to the late endosome membrane. In terms of biological role, probable peripherally associated component of the endosomal sorting required for transport complex III (ESCRT-III) which is involved in multivesicular bodies (MVBs) formation and sorting of endosomal cargo proteins into MVBs. MVBs contain intraluminal vesicles (ILVs) that are generated by invagination and scission from the limiting membrane of the endosome and mostly are delivered to lysosomes enabling degradation of membrane proteins, such as stimulated growth factor receptors, lysosomal enzymes and lipids. The MVB pathway appears to require the sequential function of ESCRT-O, -I,-II and -III complexes. ESCRT-III proteins mostly dissociate from the invaginating membrane before the ILV is released. The ESCRT machinery also functions in topologically equivalent membrane fission events, such as the terminal stages of cytokinesis and the budding of enveloped viruses (lentiviruses). ESCRT-III proteins are believed to mediate the necessary vesicle extrusion and/or membrane fission activities, possibly in conjunction with the AAA ATPase VPS4. Involved in cytokinesis. Involved in recruiting VPS4A and/or VPS4B and SPAST to the midbody of dividing cells. The polypeptide is Charged multivesicular body protein 1b (CHMP1B) (Bos taurus (Bovine)).